The chain runs to 191 residues: ATP synthase subunit b (191 aa).

The chain crosses the membrane as a helical span at residues 10 to 30; the sequence is FLVPGPTAIAELIVFLLILFI. The segment at 170–191 is disordered; sequence RAQRQPAASDVVGGQQREEVHR.

It belongs to the ATPase B chain family. As to quaternary structure, F-type ATPases have 2 components, F(1) - the catalytic core - and F(0) - the membrane proton channel. F(1) has five subunits: alpha(3), beta(3), gamma(1), delta(1), epsilon(1). F(0) has three main subunits: a(1), b(2) and c(10-14). The alpha and beta chains form an alternating ring which encloses part of the gamma chain. F(1) is attached to F(0) by a central stalk formed by the gamma and epsilon chains, while a peripheral stalk is formed by the delta and b chains.

It localises to the cell membrane. F(1)F(0) ATP synthase produces ATP from ADP in the presence of a proton or sodium gradient. F-type ATPases consist of two structural domains, F(1) containing the extramembraneous catalytic core and F(0) containing the membrane proton channel, linked together by a central stalk and a peripheral stalk. During catalysis, ATP synthesis in the catalytic domain of F(1) is coupled via a rotary mechanism of the central stalk subunits to proton translocation. Its function is as follows. Component of the F(0) channel, it forms part of the peripheral stalk, linking F(1) to F(0). This is ATP synthase subunit b from Acidothermus cellulolyticus (strain ATCC 43068 / DSM 8971 / 11B).